The chain runs to 409 residues: Probable ATP-dependent RNA helicase MG308 homolog (409 aa).

The region spanning 26 to 179 is the Helicase ATP-binding domain; it reads VFKVWPRQNV…RKQVAPLTVV (154 aa). 39-46 is an ATP binding site; sequence AETGSGKT. A DEVD box motif is present at residues 126–129; the sequence is DEVD. The region spanning 190-349 is the Helicase C-terminal domain; the sequence is LVKHFLLNLN…SVHLERDGTL (160 aa).

Belongs to the DEAD box helicase family.

It catalyses the reaction ATP + H2O = ADP + phosphate + H(+). This Mycoplasma pneumoniae (strain ATCC 29342 / M129 / Subtype 1) (Mycoplasmoides pneumoniae) protein is Probable ATP-dependent RNA helicase MG308 homolog.